The chain runs to 202 residues: Type II restriction enzyme MthZI (202 aa).

It catalyses the reaction Endonucleolytic cleavage of DNA to give specific double-stranded fragments with terminal 5'-phosphates.. A P subtype restriction enzyme that recognizes the double-stranded sequence 5'-CTAG-3' and cleaves after C-1. The protein is Type II restriction enzyme MthZI of Methanothermobacter thermautotrophicus (Methanobacterium thermoformicicum).